The sequence spans 166 residues: MEATTAGVGRLEEEALRRKERLKALREKTGRKDKEDGEPKTKHLREEEEEGEKHRELRLRNYVPEDEDLKKRRVPQAKPVAVEEKVKEQLEAAKPEPVIEEVDLANLAPRKPDWDLKRDVAKKLEKLKKRTQRAIAELIRERLKGQEDSLASAVDAATEQKTCDSD.

Met-1 bears the N-acetylmethionine mark. Residues 1 to 56 (MEATTAGVGRLEEEALRRKERLKALREKTGRKDKEDGEPKTKHLREEEEEGEKHRE) form a disordered region. Positions 8–28 (VGRLEEEALRRKERLKALREK) form a coiled coil. Basic and acidic residues predominate over residues 10–56 (RLEEEALRRKERLKALREKTGRKDKEDGEPKTKHLREEEEEGEKHRE). Lys-53 carries the post-translational modification N6-acetyllysine. Lys-94 is covalently cross-linked (Glycyl lysine isopeptide (Lys-Gly) (interchain with G-Cter in SUMO2)). Residues 117–144 (KRDVAKKLEKLKKRTQRAIAELIRERLK) adopt a coiled-coil conformation. The tract at residues 147 to 166 (EDSLASAVDAATEQKTCDSD) is disordered. Residues Ser-149 and Ser-165 each carry the phosphoserine modification.

This chain is Coiled-coil domain-containing protein 12 (CCDC12), found in Homo sapiens (Human).